We begin with the raw amino-acid sequence, 215 residues long: UPF0056 membrane protein YhcE (215 aa).

Transmembrane regions (helical) follow at residues 14–34, 54–74, 81–101, 120–140, 147–167, and 189–209; these read FFIG…FISM, VAII…LFGI, IAGG…KLGE, VVPL…TIVW, ISYL…CWGL, and IMGL…IKGI.

The protein belongs to the UPF0056 (MarC) family.

Its subcellular location is the cell membrane. The chain is UPF0056 membrane protein YhcE (ychE) from Escherichia coli (strain K12).